Consider the following 129-residue polypeptide: Large ribosomal subunit protein bL21 (129 aa).

Belongs to the bacterial ribosomal protein bL21 family. As to quaternary structure, part of the 50S ribosomal subunit. Contacts protein L20.

Its function is as follows. This protein binds to 23S rRNA in the presence of protein L20. The chain is Large ribosomal subunit protein bL21 from Prochlorococcus marinus (strain MIT 9313).